The sequence spans 135 residues: Ribosome-binding factor A (135 aa).

The protein belongs to the RbfA family. In terms of assembly, monomer. Binds 30S ribosomal subunits, but not 50S ribosomal subunits or 70S ribosomes.

It localises to the cytoplasm. In terms of biological role, one of several proteins that assist in the late maturation steps of the functional core of the 30S ribosomal subunit. Associates with free 30S ribosomal subunits (but not with 30S subunits that are part of 70S ribosomes or polysomes). Required for efficient processing of 16S rRNA. May interact with the 5'-terminal helix region of 16S rRNA. The protein is Ribosome-binding factor A of Dinoroseobacter shibae (strain DSM 16493 / NCIMB 14021 / DFL 12).